The chain runs to 105 residues: Nucleoid-associated protein MXAN_1931 (105 aa).

Belongs to the YbaB/EbfC family. Homodimer.

The protein localises to the cytoplasm. The protein resides in the nucleoid. Functionally, binds to DNA and alters its conformation. May be involved in regulation of gene expression, nucleoid organization and DNA protection. The sequence is that of Nucleoid-associated protein MXAN_1931 from Myxococcus xanthus (strain DK1622).